Here is a 2066-residue protein sequence, read N- to C-terminus: Kinesin-like protein KIN-12C (2066 aa).

Disordered regions lie at residues 1-41 (MSRN…SQIQ) and 59-116 (RAQH…RVSL). A compositionally biased stretch (low complexity) spans 20-33 (SLSLFSPSRPPLNS). The segment covering 67-76 (GPEKKFEVLE) has biased composition (basic and acidic residues). A compositionally biased stretch (polar residues) spans 99–109 (EPNSAQSTPTR). Positions 168 to 505 (NVQVLIRLRP…LKFAQRAKLI (338 aa)) constitute a Kinesin motor domain. 249-256 (GQTGSGKT) contributes to the ATP binding site. Microtubules-binding regions lie at residues 375–379 (SSRSH), 406–412 (VDLAGSE), and 454–458 (HVPYR). Coiled coils occupy residues 1521-1618 (DLKT…VDEI) and 1650-1772 (KIYA…EILL). Disordered stretches follow at residues 1803–1823 (SAAE…RGSS) and 2043–2066 (KYRK…TRYR). The stretch at 1905 to 2051 (VQRVVEKAQQ…AKYRKTSNNH (147 aa)) forms a coiled coil. Positions 2047–2066 (TSNNHPSTRTQGQSSGTRYR) are enriched in polar residues.

Belongs to the TRAFAC class myosin-kinesin ATPase superfamily. Kinesin family. KIN-12 subfamily. Interacts with TAN. Interacts with RANGAP1. Expressed in tissues enriched in dividing cells, such as root meristems, root primordia, and leaf primordia/young leaves.

Its subcellular location is the cytoplasm. The protein resides in the cytoskeleton. It is found in the phragmoplast. Functionally, involved in the spatial control of cytokinesis by a proper phragmoplast guidance. Localizes TAN to the cortical division sites (CDS) during cytokinesis via direct binding. This is Kinesin-like protein KIN-12C from Arabidopsis thaliana (Mouse-ear cress).